The chain runs to 247 residues: 2,3-bisphosphoglycerate-dependent phosphoglycerate mutase (247 aa).

Substrate-binding positions include 8–15, 21–22, R60, 87–90, K98, 114–115, and 183–184; these read RHGESQWN, TG, ERHY, RR, and GN. H9 functions as the Tele-phosphohistidine intermediate in the catalytic mechanism. Residue E87 is the Proton donor/acceptor of the active site.

It belongs to the phosphoglycerate mutase family. BPG-dependent PGAM subfamily.

The enzyme catalyses (2R)-2-phosphoglycerate = (2R)-3-phosphoglycerate. It participates in carbohydrate degradation; glycolysis; pyruvate from D-glyceraldehyde 3-phosphate: step 3/5. Its function is as follows. Catalyzes the interconversion of 2-phosphoglycerate and 3-phosphoglycerate. This chain is 2,3-bisphosphoglycerate-dependent phosphoglycerate mutase, found in Chlorobium phaeovibrioides (strain DSM 265 / 1930) (Prosthecochloris vibrioformis (strain DSM 265)).